A 92-amino-acid polypeptide reads, in one-letter code: Small ribosomal subunit protein uS19 (92 aa).

This sequence belongs to the universal ribosomal protein uS19 family.

Functionally, protein S19 forms a complex with S13 that binds strongly to the 16S ribosomal RNA. This Desulfatibacillum aliphaticivorans protein is Small ribosomal subunit protein uS19.